The sequence spans 492 residues: Spindle assembly abnormal protein 6 (492 aa).

One can recognise a PISA domain in the interval 46–98; that stretch reads SGEKELKFEISRSDDFEFLFSETLNNEKYQILARDHDLTVDFDAFPKVIIQHL. Residues 192-407 are a coiled coil; the sequence is KSADELASLR…KIAHYRAQRF (216 aa).

In terms of assembly, nine homodimers form a cartwheel structure with an internal diameter of 23 nM and radial spokes connecting to the microtubule triplets. Interacts with sas-5.

The protein localises to the cytoplasm. The protein resides in the cytoskeleton. It is found in the microtubule organizing center. It localises to the centrosome. Its subcellular location is the centriole. Its function is as follows. Central scaffolding component of the centrioles ensuring their 9-fold symmetry. Required for centrosome biogenesis and duplication. This is Spindle assembly abnormal protein 6 from Caenorhabditis elegans.